A 140-amino-acid chain; its full sequence is MSKRGRGGSAGNKFRMSLGLPVAATINCADNTGAKNLYIISVKGIKGRLNRLPSACVGDMVMATVKKGKPDLRKKVMPAVVVRQRKPWRRKDGVFMYFEDNAGVIVNAKGEMKGSAITGPIGKECADLWPRIASAANAIV.

This sequence belongs to the universal ribosomal protein uL14 family.

The chain is Large ribosomal subunit protein uL14 (RPL23) from Nicotiana tabacum (Common tobacco).